Consider the following 1598-residue polypeptide: Pentafunctional AROM polypeptide (1598 aa).

Residues 1–384 (MGVPTKISIL…YEPRASTVSN (384 aa)) are 3-dehydroquinate synthase. NAD(+) contacts are provided by residues 44-46 (DTN), 81-84 (ESSK), 114-116 (GGV), and aspartate 119. Arginine 130 is a 7-phospho-2-dehydro-3-deoxy-D-arabino-heptonate binding site. 139–140 (TT) lines the NAD(+) pocket. Aspartate 146 and lysine 152 together coordinate 7-phospho-2-dehydro-3-deoxy-D-arabino-heptonate. Position 161 (lysine 161) interacts with NAD(+). Asparagine 162 contributes to the 7-phospho-2-dehydro-3-deoxy-D-arabino-heptonate binding site. Residues 179–182 (FLNT) and asparagine 190 contribute to the NAD(+) site. Zn(2+) is bound at residue glutamate 194. 7-phospho-2-dehydro-3-deoxy-D-arabino-heptonate contacts are provided by residues 194-197 (EVIK) and lysine 250. Glutamate 260 acts as the Proton acceptor; for 3-dehydroquinate synthase activity in catalysis. 7-phospho-2-dehydro-3-deoxy-D-arabino-heptonate contacts are provided by residues 264–268 (RNLLN) and histidine 271. Residue histidine 271 participates in Zn(2+) binding. Histidine 275 acts as the Proton acceptor; for 3-dehydroquinate synthase activity in catalysis. The 7-phospho-2-dehydro-3-deoxy-D-arabino-heptonate site is built by histidine 287 and lysine 356. Zn(2+) is bound at residue histidine 287. Residues 397 to 842 (VYPGFPKSLN…WNTLAQTFKV (446 aa)) form an EPSP synthase region. Cysteine 824 functions as the For EPSP synthase activity in the catalytic mechanism. A shikimate kinase region spans residues 867-1059 (AASIFIIGMR…RRKENTFFVS (193 aa)). 874–881 (GMRGAGKT) is an ATP binding site. Residues 1060-1280 (LTFPDLTPAS…AAPGQLSARE (221 aa)) form a 3-dehydroquinase region. The Proton acceptor; for 3-dehydroquinate dehydratase activity role is filled by histidine 1183. Lysine 1211 acts as the Schiff-base intermediate with substrate; for 3-dehydroquinate dehydratase activity in catalysis. The tract at residues 1293–1598 (AKKFAVIGKP…GVSSSDDTIS (306 aa)) is shikimate dehydrogenase.

The protein in the N-terminal section; belongs to the sugar phosphate cyclases superfamily. Dehydroquinate synthase family. This sequence in the 2nd section; belongs to the EPSP synthase family. It in the 3rd section; belongs to the shikimate kinase family. In the 4th section; belongs to the type-I 3-dehydroquinase family. The protein in the C-terminal section; belongs to the shikimate dehydrogenase family. As to quaternary structure, homodimer. It depends on Zn(2+) as a cofactor.

The protein resides in the cytoplasm. It catalyses the reaction 7-phospho-2-dehydro-3-deoxy-D-arabino-heptonate = 3-dehydroquinate + phosphate. It carries out the reaction 3-dehydroquinate = 3-dehydroshikimate + H2O. The enzyme catalyses shikimate + NADP(+) = 3-dehydroshikimate + NADPH + H(+). The catalysed reaction is shikimate + ATP = 3-phosphoshikimate + ADP + H(+). It catalyses the reaction 3-phosphoshikimate + phosphoenolpyruvate = 5-O-(1-carboxyvinyl)-3-phosphoshikimate + phosphate. It functions in the pathway metabolic intermediate biosynthesis; chorismate biosynthesis; chorismate from D-erythrose 4-phosphate and phosphoenolpyruvate: step 2/7. Its pathway is metabolic intermediate biosynthesis; chorismate biosynthesis; chorismate from D-erythrose 4-phosphate and phosphoenolpyruvate: step 3/7. It participates in metabolic intermediate biosynthesis; chorismate biosynthesis; chorismate from D-erythrose 4-phosphate and phosphoenolpyruvate: step 4/7. The protein operates within metabolic intermediate biosynthesis; chorismate biosynthesis; chorismate from D-erythrose 4-phosphate and phosphoenolpyruvate: step 5/7. It functions in the pathway metabolic intermediate biosynthesis; chorismate biosynthesis; chorismate from D-erythrose 4-phosphate and phosphoenolpyruvate: step 6/7. The AROM polypeptide catalyzes 5 consecutive enzymatic reactions in prechorismate polyaromatic amino acid biosynthesis. The sequence is that of Pentafunctional AROM polypeptide from Paracoccidioides brasiliensis (strain Pb18).